The sequence spans 273 residues: Putative phosphoenolpyruvate synthase regulatory protein (273 aa).

153–160 is an ADP binding site; that stretch reads GVSRCGKT.

Belongs to the pyruvate, phosphate/water dikinase regulatory protein family. PSRP subfamily.

The catalysed reaction is [pyruvate, water dikinase] + ADP = [pyruvate, water dikinase]-phosphate + AMP + H(+). The enzyme catalyses [pyruvate, water dikinase]-phosphate + phosphate + H(+) = [pyruvate, water dikinase] + diphosphate. Bifunctional serine/threonine kinase and phosphorylase involved in the regulation of the phosphoenolpyruvate synthase (PEPS) by catalyzing its phosphorylation/dephosphorylation. This Sodalis glossinidius (strain morsitans) protein is Putative phosphoenolpyruvate synthase regulatory protein.